Reading from the N-terminus, the 291-residue chain is tRNA dimethylallyltransferase (291 aa).

9 to 16 (GTTASGKS) lines the ATP pocket. Residue 11–16 (TASGKS) coordinates substrate. Positions 34-37 (DSLA) are interaction with substrate tRNA.

It belongs to the IPP transferase family. In terms of assembly, monomer. The cofactor is Mg(2+).

The catalysed reaction is adenosine(37) in tRNA + dimethylallyl diphosphate = N(6)-dimethylallyladenosine(37) in tRNA + diphosphate. Catalyzes the transfer of a dimethylallyl group onto the adenine at position 37 in tRNAs that read codons beginning with uridine, leading to the formation of N6-(dimethylallyl)adenosine (i(6)A). The sequence is that of tRNA dimethylallyltransferase from Campylobacter concisus (strain 13826).